A 702-amino-acid polypeptide reads, in one-letter code: Polyribonucleotide nucleotidyltransferase (702 aa).

Mg(2+) contacts are provided by D485 and D491. In terms of domain architecture, KH spans P552–I612. Positions G622 to K690 constitute an S1 motif domain.

The protein belongs to the polyribonucleotide nucleotidyltransferase family. The cofactor is Mg(2+).

It localises to the cytoplasm. It carries out the reaction RNA(n+1) + phosphate = RNA(n) + a ribonucleoside 5'-diphosphate. In terms of biological role, involved in mRNA degradation. Catalyzes the phosphorolysis of single-stranded polyribonucleotides processively in the 3'- to 5'-direction. This Clostridium botulinum (strain ATCC 19397 / Type A) protein is Polyribonucleotide nucleotidyltransferase.